Here is a 611-residue protein sequence, read N- to C-terminus: Chaperone protein DnaK (611 aa).

Threonine 173 bears the Phosphothreonine; by autocatalysis mark. The span at 577–591 (AAAAQAAQGGEADAG) shows a compositional bias: low complexity. The tract at residues 577 to 611 (AAAAQAAQGGEADAGAGKKDDGVVDADFEEVKDDK) is disordered. Over residues 599-611 (VVDADFEEVKDDK) the composition is skewed to acidic residues.

The protein belongs to the heat shock protein 70 family.

Functionally, acts as a chaperone. The chain is Chaperone protein DnaK from Lysinibacillus sphaericus (strain C3-41).